Here is a 582-residue protein sequence, read N- to C-terminus: Methionine--tRNA ligase (582 aa).

The 'HIGH' region signature appears at 24–34; it reads PYIYAVPHLGN. The Zn(2+) site is built by cysteine 156, cysteine 159, cysteine 169, and cysteine 172. The 'KMSKS' region motif lies at 346–350; that stretch reads KFSKS. Residue lysine 349 coordinates ATP.

The protein belongs to the class-I aminoacyl-tRNA synthetase family. MetG type 1 subfamily. Zn(2+) is required as a cofactor.

The protein localises to the cytoplasm. It catalyses the reaction tRNA(Met) + L-methionine + ATP = L-methionyl-tRNA(Met) + AMP + diphosphate. In terms of biological role, is required not only for elongation of protein synthesis but also for the initiation of all mRNA translation through initiator tRNA(fMet) aminoacylation. The polypeptide is Methionine--tRNA ligase (Caldivirga maquilingensis (strain ATCC 700844 / DSM 13496 / JCM 10307 / IC-167)).